The chain runs to 277 residues: Uridine-cytidine kinase 1 (277 aa).

Residues 1–30 are disordered; the sequence is MASAGGEDCESPAPEADRPHQRPFLIGVSG. 30 to 38 is an ATP binding site; the sequence is GGTASGKST. Residue Asp65 is part of the active site. The substrate site is built by Asp87, Tyr115, His120, Arg169, Arg178, and Gln186. Asp215 lines the ATP pocket. The segment at 247 to 277 is disordered; sequence SYKRTFSEPGDHPGMLTSGKRSHLESSSRPH. Thr251 carries the post-translational modification Phosphothreonine. Ser253 bears the Phosphoserine mark. Residues 268–277 show a composition bias toward basic and acidic residues; the sequence is SHLESSSRPH.

It belongs to the uridine kinase family. Ubiquitous.

It catalyses the reaction uridine + ATP = UMP + ADP + H(+). The enzyme catalyses cytidine + ATP = CMP + ADP + H(+). It participates in pyrimidine metabolism; CTP biosynthesis via salvage pathway; CTP from cytidine: step 1/3. Its pathway is pyrimidine metabolism; UMP biosynthesis via salvage pathway; UMP from uridine: step 1/1. Phosphorylates uridine and cytidine to uridine monophosphate and cytidine monophosphate. Does not phosphorylate deoxyribonucleosides or purine ribonucleosides. Can use ATP or GTP as a phosphate donor. Can also phosphorylate cytidine and uridine nucleoside analogs such as 6-azauridine, 5-fluorouridine, 4-thiouridine, 5-bromouridine, N(4)-acetylcytidine, N(4)-benzoylcytidine, 5-fluorocytidine, 2-thiocytidine, 5-methylcytidine, and N(4)-anisoylcytidine. The sequence is that of Uridine-cytidine kinase 1 (UCK1) from Homo sapiens (Human).